Consider the following 1624-residue polypeptide: ATP-binding cassette sub-family A member 9 (1624 aa).

The chain crosses the membrane as a helical span at residues 31–51; that stretch reads LLEWLFSFLLVLFLYLFFSNL. 2 N-linked (GlcNAc...) asparagine glycosylation sites follow: Asn120 and Asn195. Transmembrane regions (helical) follow at residues 221–243, 269–289, 300–320, 329–349, 354–374, and 398–418; these read VATDFFIFFCIISFSTFIYYVSV, SWGLMYAGFILIMATLMALIV, FVMVFTLFLLYGLSLITLAFL, FLTGLVVFLLIVFWGILGFPA, LPAFLEWTLCLLSPFAFTVGM, and LIIATLFMLVFDTLLYLVLTL. Positions 481-716 constitute an ABC transporter 1 domain; sequence IRIKNLKKEY…WGIGYHLSLH (236 aa). 517 to 524 contributes to the ATP binding site; it reads GHSGAGKT. The helical transmembrane segment at 864-884 threads the bilayer; sequence LWTILLLFGISFIPQLLEHLF. A glycan (N-linked (GlcNAc...) asparagine) is linked at Asn949. 6 consecutive transmembrane segments (helical) span residues 1026–1046, 1065–1085, 1108–1128, 1136–1156, 1163–1183, and 1200–1220; these read TFFWIPMAASFTPYIAMSSIG, AYWFGQALVDVSLYFLILLLM, ILCSIGYVSSLVFLTYVISFI, SGIWSFFFLIVVIFSIVATDL, GLFFGTMLIPPFTLIGSLFIF, and EIVYLALLIPYLHFLIFLFIL. An ABC transporter 2 domain is found at 1288 to 1521; it reads LRKEYAGKKK…FGKDYLLEMK (234 aa). 1326–1333 is a binding site for ATP; sequence GHNGAGKS.

Belongs to the ABC transporter superfamily. ABCA family. Widely expressed with higher expression in heart.

Its subcellular location is the membrane. Functionally, transporter that may play a role in monocyte differentiation and lipid transport and homeostasis. This Homo sapiens (Human) protein is ATP-binding cassette sub-family A member 9 (ABCA9).